A 438-amino-acid chain; its full sequence is MSPVEISGADAVVSPPMRGRVPLPPPPPPPPPPMRRRAPLPPPPPPPMRRRAPLPPPPPPAMRRRVLPRPPPPPPPLPMFDAEVLCCCYPPTRVRREAPLPPPPLIFVGAPPPTCALKGIVCCFPCPSKKKSSLKRFNWVKITRALPGSLWDELQIQQVCHGDIEDEQILCAIELDVSEIETFFSLGAAKPEKDPLIDLRRATDTELTLMLLNIRLPADMMAAIMAMDESVLDDDEIRGLINLFPTKENMELLMSYTGGKWTLEKWEQYFQELRKVLRVESKLRVFYFKIQFSTKITQFKKRLNVVNSACEEVCSSQKLKEIMKKITCLGNTSNQGTGRGVTVGFNLDSLCVKSMHNFCKVLASEASDLLDVHKDLQSLESASKKQLKSLAEEMQDIIRDLEKLNQELTAAETDGPDSQVFRNVCWFCSYGYFDQPWI.

The disordered stretch occupies residues 1 to 74; sequence MSPVEISGAD…RVLPRPPPPP (74 aa). A compositionally biased stretch (pro residues) spans 22 to 61; it reads PLPPPPPPPPPPMRRRAPLPPPPPPPMRRRAPLPPPPPPA. Residues 124–438 form the FH2 domain; that stretch reads FPCPSKKKSS…SYGYFDQPWI (315 aa).

This sequence belongs to the formin-like family. Class-II subfamily.

The sequence is that of Putative formin-like protein 21a (FH21A) from Arabidopsis thaliana (Mouse-ear cress).